Consider the following 122-residue polypeptide: Large ribosomal subunit protein uL14 (122 aa).

The protein belongs to the universal ribosomal protein uL14 family. Part of the 50S ribosomal subunit. Forms a cluster with proteins L3 and L19. In the 70S ribosome, L14 and L19 interact and together make contacts with the 16S rRNA in bridges B5 and B8.

Its function is as follows. Binds to 23S rRNA. Forms part of two intersubunit bridges in the 70S ribosome. This Flavobacterium psychrophilum (strain ATCC 49511 / DSM 21280 / CIP 103535 / JIP02/86) protein is Large ribosomal subunit protein uL14.